The sequence spans 382 residues: uncharacterized protein (382 aa).

Helical transmembrane passes span 8-28 (VMLL…LNTL), 45-65 (MVSS…GYLI), 75-95 (YLAS…VGFW), 102-122 (FIAG…LMCS), 131-151 (LLAA…LLVS), 157-177 (LLHV…PLLF), 204-224 (LGVN…GLMP), 231-251 (GMAN…GILG), 270-290 (VQVF…AMAP), 291-311 (ALFI…AWAC), 325-345 (ALLL…AMLM), and 349-369 (SDNL…LMLL).

It belongs to the major facilitator superfamily. YcaD (TC 2.A.1.26) family.

The protein localises to the cell inner membrane. This is an uncharacterized protein from Salmonella agona (strain SL483).